Here is a 121-residue protein sequence, read N- to C-terminus: MASCLALRMALLLVSGVLAPAVLTDDVPQEPVPTLWNEPAELPSGEGPVESTSPGREPVDTGPPAPTVAPGPEDSTAQERLDQGGGSLGPGAIAAIVIAALLATCVVLALVVVALRKFSAS.

Positions Met1–Thr24 are cleaved as a signal peptide. The Extracellular portion of the chain corresponds to Asp25 to Ala92. The interval Pro28–Gly84 is disordered. The helical transmembrane segment at Ile93–Val113 threads the bilayer. Over Ala114–Ser121 the chain is Cytoplasmic.

As to quaternary structure, interacts (via the extracellular domain) with FGF2. In terms of tissue distribution, expressed in cartilage.

It localises to the membrane. Its subcellular location is the cytoplasm. The protein resides in the secreted. It is found in the extracellular space. The protein localises to the extracellular matrix. Functionally, plays a role in the regulation of chondrocyte maturation and postnatal endochondral ossification. May inhibit cell growth stimulation induced by FGF2. This Homo sapiens (Human) protein is Protein SNORC.